The chain runs to 101 residues: Long chronological lifespan protein 1 (101 aa).

The N-terminal stretch at methionine 1–serine 17 is a signal peptide. Residue serine 81 is the site of GPI-anchor amidated serine attachment. A propeptide spans phenylalanine 82–phenylalanine 101 (removed in mature form).

The protein localises to the cell membrane. The polypeptide is Long chronological lifespan protein 1 (LCL1) (Saccharomyces cerevisiae (strain ATCC 204508 / S288c) (Baker's yeast)).